The chain runs to 143 residues: Mite group 2 allergen Pso o 2 (143 aa).

An N-terminal signal peptide occupies residues 1–17; it reads MMKTLVVLAITLAVVSA. Intrachain disulfides connect C25/C134, C38/C43, and C89/C94.

Belongs to the NPC2 family.

It localises to the secreted. The chain is Mite group 2 allergen Pso o 2 (ALLA) from Psoroptes ovis (Sheep scab mite).